Here is a 314-residue protein sequence, read N- to C-terminus: Homoserine O-acetyltransferase (314 aa).

Cys142 functions as the Acyl-thioester intermediate in the catalytic mechanism. Substrate is bound by residues Lys163 and Ser192. Residue His235 is the Proton acceptor of the active site. The active site involves Glu237. Arg249 is a binding site for substrate.

It belongs to the MetA family.

It is found in the cytoplasm. It catalyses the reaction L-homoserine + acetyl-CoA = O-acetyl-L-homoserine + CoA. It participates in amino-acid biosynthesis; L-methionine biosynthesis via de novo pathway; O-acetyl-L-homoserine from L-homoserine: step 1/1. In terms of biological role, transfers an acetyl group from acetyl-CoA to L-homoserine, forming acetyl-L-homoserine. The sequence is that of Homoserine O-acetyltransferase from Streptococcus mutans serotype c (strain ATCC 700610 / UA159).